Reading from the N-terminus, the 173-residue chain is dCTP deaminase, dUMP-forming (173 aa).

DCTP-binding positions include 93–98 (RSSIGR), Asp-111, 119–121 (TLE), Gln-138, and Tyr-151. Residue Glu-121 is the Proton donor/acceptor of the active site.

Belongs to the dCTP deaminase family. In terms of assembly, homotrimer.

The enzyme catalyses dCTP + 2 H2O = dUMP + NH4(+) + diphosphate. Its pathway is pyrimidine metabolism; dUMP biosynthesis; dUMP from dCTP: step 1/1. In terms of biological role, bifunctional enzyme that catalyzes both the deamination of dCTP to dUTP and the hydrolysis of dUTP to dUMP without releasing the toxic dUTP intermediate. The polypeptide is dCTP deaminase, dUMP-forming (Cytophaga hutchinsonii (strain ATCC 33406 / DSM 1761 / CIP 103989 / NBRC 15051 / NCIMB 9469 / D465)).